Consider the following 102-residue polypeptide: Small ribosomal subunit protein uS10 (102 aa).

The protein belongs to the universal ribosomal protein uS10 family. In terms of assembly, part of the 30S ribosomal subunit.

Involved in the binding of tRNA to the ribosomes. The chain is Small ribosomal subunit protein uS10 from Cupriavidus metallidurans (strain ATCC 43123 / DSM 2839 / NBRC 102507 / CH34) (Ralstonia metallidurans).